The sequence spans 255 residues: Pyrroloquinoline-quinone synthase (255 aa).

Belongs to the PqqC family.

The enzyme catalyses 6-(2-amino-2-carboxyethyl)-7,8-dioxo-1,2,3,4,7,8-hexahydroquinoline-2,4-dicarboxylate + 3 O2 = pyrroloquinoline quinone + 2 H2O2 + 2 H2O + H(+). Its pathway is cofactor biosynthesis; pyrroloquinoline quinone biosynthesis. In terms of biological role, ring cyclization and eight-electron oxidation of 3a-(2-amino-2-carboxyethyl)-4,5-dioxo-4,5,6,7,8,9-hexahydroquinoline-7,9-dicarboxylic-acid to PQQ. In Granulibacter bethesdensis (strain ATCC BAA-1260 / CGDNIH1), this protein is Pyrroloquinoline-quinone synthase.